We begin with the raw amino-acid sequence, 734 residues long: Photosystem I P700 chlorophyll a apoprotein A2 (734 aa).

Helical transmembrane passes span 46–69 (IFASHFGQLAIIFLWTSGNLFHVA), 135–158 (LYTGALFLLFLSTLSLIAGWLHLQ), 175–199 (LNHHLSGLFGVSSLAWTGHLVHVAI), 273–291 (MAHHHLAIAFIFLIAGHMY), 330–353 (IHFQLGLALASLGVITSLVAQHMY), 369–395 (AALYTHHQYIAGFIMTGAFAHGAIFFI), 417–439 (AIISHLSWASLFLGFHTLGLYVH), and 517–535 (FLVHHAIALGLHTTTLILV). Residues Cys559 and Cys568 each coordinate [4Fe-4S] cluster. 2 helical membrane-spanning segments follow: residues 575–596 (AFYLAVFWMLNTIGWVTFYWHW) and 643–665 (LSVWAWMFLFGHLVWATGFMFLI). Residues His654, Met662, and Tyr670 each contribute to the chlorophyll a site. A phylloquinone-binding site is contributed by Trp671. The chain crosses the membrane as a helical span at residues 707 to 727 (LVGLAHFSVGYIFTYAAFLIA).

The protein belongs to the PsaA/PsaB family. As to quaternary structure, the PsaA/B heterodimer binds the P700 chlorophyll special pair and subsequent electron acceptors. PSI consists of a core antenna complex that captures photons, and an electron transfer chain that converts photonic excitation into a charge separation. The eukaryotic PSI reaction center is composed of at least 11 subunits. Requires P700 is a chlorophyll a/chlorophyll a' dimer, A0 is one or more chlorophyll a, A1 is one or both phylloquinones and FX is a shared 4Fe-4S iron-sulfur center. as cofactor.

The protein localises to the plastid. It localises to the chloroplast thylakoid membrane. It catalyses the reaction reduced [plastocyanin] + hnu + oxidized [2Fe-2S]-[ferredoxin] = oxidized [plastocyanin] + reduced [2Fe-2S]-[ferredoxin]. Its function is as follows. PsaA and PsaB bind P700, the primary electron donor of photosystem I (PSI), as well as the electron acceptors A0, A1 and FX. PSI is a plastocyanin-ferredoxin oxidoreductase, converting photonic excitation into a charge separation, which transfers an electron from the donor P700 chlorophyll pair to the spectroscopically characterized acceptors A0, A1, FX, FA and FB in turn. Oxidized P700 is reduced on the lumenal side of the thylakoid membrane by plastocyanin. This chain is Photosystem I P700 chlorophyll a apoprotein A2, found in Triticum aestivum (Wheat).